The sequence spans 250 residues: Probable transcriptional regulatory protein RER_29220 (250 aa).

It belongs to the TACO1 family.

It is found in the cytoplasm. The sequence is that of Probable transcriptional regulatory protein RER_29220 from Rhodococcus erythropolis (strain PR4 / NBRC 100887).